Reading from the N-terminus, the 335-residue chain is Deoxyhypusine hydroxylase (335 aa).

HEAT-like PBS-type repeat units lie at residues 71–97 (LKHE…VAKD), 104–130 (CRHE…LRDN), 200–233 (LRYR…GLKD), 238–264 (FRHE…ALSN), and 271–298 (VRHE…FLND). Fe cation is bound by residues histidine 73, glutamate 74, histidine 106, and glutamate 107. Fe cation is bound by residues histidine 240, glutamate 241, histidine 273, and glutamate 274.

Belongs to the deoxyhypusine hydroxylase family. It depends on Fe(2+) as a cofactor.

The protein localises to the cytoplasm. Its subcellular location is the nucleus. It catalyses the reaction [eIF5A protein]-deoxyhypusine + AH2 + O2 = [eIF5A protein]-hypusine + A + H2O. Its pathway is protein modification; eIF5A hypusination. In terms of biological role, catalyzes the hydroxylation of the N(6)-(4-aminobutyl)-L-lysine intermediate to form hypusine, an essential post-translational modification only found in mature eIF-5A factor. This is Deoxyhypusine hydroxylase (lia1) from Neosartorya fischeri (strain ATCC 1020 / DSM 3700 / CBS 544.65 / FGSC A1164 / JCM 1740 / NRRL 181 / WB 181) (Aspergillus fischerianus).